The chain runs to 159 residues: UPF0587 protein v1g245604 (159 aa).

Zn(2+)-binding residues include cysteine 33, cysteine 36, cysteine 67, and cysteine 70.

It belongs to the UPF0587 family.

The sequence is that of UPF0587 protein v1g245604 from Nematostella vectensis (Starlet sea anemone).